Reading from the N-terminus, the 189-residue chain is Phosphoheptose isomerase (189 aa).

The SIS domain occupies 33 to 189; sequence CTDTLKAGNK…ELVEREIYGG (157 aa). 48–50 is a binding site for substrate; that stretch reads NGG. Residues His57 and Glu61 each contribute to the Zn(2+) site. Substrate-binding positions include Glu61, 90-91, 116-118, Ser121, and Gln168; these read ND and STS. Positions 168 and 176 each coordinate Zn(2+).

It belongs to the SIS family. GmhA subfamily. Zn(2+) is required as a cofactor.

It localises to the cytoplasm. It carries out the reaction 2 D-sedoheptulose 7-phosphate = D-glycero-alpha-D-manno-heptose 7-phosphate + D-glycero-beta-D-manno-heptose 7-phosphate. The protein operates within carbohydrate biosynthesis; D-glycero-D-manno-heptose 7-phosphate biosynthesis; D-glycero-alpha-D-manno-heptose 7-phosphate and D-glycero-beta-D-manno-heptose 7-phosphate from sedoheptulose 7-phosphate: step 1/1. Catalyzes the isomerization of sedoheptulose 7-phosphate in D-glycero-D-manno-heptose 7-phosphate. In Akkermansia muciniphila (strain ATCC BAA-835 / DSM 22959 / JCM 33894 / BCRC 81048 / CCUG 64013 / CIP 107961 / Muc), this protein is Phosphoheptose isomerase.